The following is a 316-amino-acid chain: Serine protease 45 (316 aa).

The N-terminal stretch at 1–38 (MAASLSRLSAGLAASRPLGLSRSFLLLVLLLLNSGYKG) is a signal peptide. The Peptidase S1 domain maps to 49 to 290 (WWPKNLDLSR…YSRWIKKQIS (242 aa)). Cysteines 74 and 90 form a disulfide. Histidine 89 acts as the Charge relay system in catalysis. N-linked (GlcNAc...) asparagine glycosylation is present at asparagine 110. Catalysis depends on aspartate 137, which acts as the Charge relay system. Residues asparagine 162 and asparagine 186 are each glycosylated (N-linked (GlcNAc...) asparagine). Cystine bridges form between cysteine 171/cysteine 248, cysteine 206/cysteine 229, and cysteine 238/cysteine 266. Serine 242 serves as the catalytic Charge relay system.

This sequence belongs to the peptidase S1 family.

It is found in the secreted. In Bos taurus (Bovine), this protein is Serine protease 45 (PRSS45).